Reading from the N-terminus, the 859-residue chain is MFGELRDLLTGGGNETTTKKVKGTVVLMKKNVLDFNDFNASFLDRLHEFLGNKITLRLVSSDVTDSENGSKGKLGKAAHLEDWITTITSLTAGESAFKVTFDYETDFGYPGAFLIRNSHFSEFLLKSLTLEDVPGHGRVHYICNSWIYPAKHYTTDRVFFSNKTYLPHETPATLLKYREEELVSLRGTGEGELKEWDRVYDYAYYNDLGVPPKNPRPVLGGTQEYPYPRRGRTGRKPTKEDPQTESRLPITSSLDIYVPRDERFGHLKMSDFLAYALKAIAQFIQPALEAVFDDTPKEFDSFEDVLKIYEEGIDLPNQALIDSIVKNIPLEMLKEIFRTDGQKFLKFPVPQVIKEDKTAWRTDEEFAREMLAGLNPVVIQLLKEFPPKSKLDSESYGNQNSTITKSHIEHNLDGLTVEEALEKERLFILDHHDTLMPYLGRVNTTTTKTYASRTLLFLKDDGTLKPLVIELSLPHPNGDKFGAVSEVYTPGEGVYDSLWQLAKAFVGVNDSGNHQLISHWMQTHASIEPFVIATNRQLSVLHPVFKLLEPHFRDTMNINALARQILINGGGIFEITVFPSKYAMEMSSFIYKNHWTFPDQALPAELKKRGMAVEDPEAPHGLRLRIKDYPYAVDGLEVWYAIESWVRDYIFLFYKIEEDIQTDTELQAWWKEVREEGHGDKKSEPWWPKMQTREELVESCTIIIWVASALHAAVNFGQYPVAGYLPNRPTISRQYMPKENTPEFEELEKNPDKVFLKTITAQLQTLLGISLIEILSTHSSDEVYLGQRDSKEWAAEKEALEAFEKFGEKVKEIEKNIDERNDDETLKNRTGLVKMPYTLLFPSSEGGVTGRGIPNSVSI.

The 141-residue stretch at 21 to 161 (VKGTVVLMKK…HYTTDRVFFS (141 aa)) folds into the PLAT domain. Residues 164–859 (TYLPHETPAT…GRGIPNSVSI (696 aa)) form the Lipoxygenase domain. Residues 213–246 (KNPRPVLGGTQEYPYPRRGRTGRKPTKEDPQTES) are disordered. Fe cation-binding residues include histidine 519, histidine 524, histidine 711, asparagine 715, and isoleucine 859.

It belongs to the lipoxygenase family. In terms of assembly, monomer. It depends on Fe cation as a cofactor. In terms of tissue distribution, seedlings, roots, leaves, and flowers (at protein level). Expressed in guard cells.

The protein resides in the cytoplasm. The catalysed reaction is (9Z,12Z)-octadecadienoate + O2 = (9S)-hydroperoxy-(10E,12Z)-octadecadienoate. It carries out the reaction (9Z,12Z,15Z)-octadecatrienoate + O2 = (9S)-hydroperoxy-(10E,12Z,15Z)-octadecatrienoate. The protein operates within lipid metabolism; oxylipin biosynthesis. Functionally, 9S-lipoxygenase that can use linoleic acid or linolenic acid as substrates. Plant lipoxygenases may be involved in a number of diverse aspects of plant physiology including growth and development, pest resistance, and senescence or responses to wounding. Catalyzes the hydroperoxidation of lipids containing a cis,cis-1,4-pentadiene structure. Function as regulators of root development by controlling the emergence of lateral roots. 9S-lypoxygenase-derived oxylipins may play an antagonistic role to ethylene signaling in the control of responses involving oxidative stress, lipid peroxidation and plant defense. LOX1-derived oxylipins may be involved in stress signaling from roots to shoots in response to cadmium exposure. 9S-lypoxygenase-derived oxylipins are engaged during infection to control the balance between salicylic acid (SA) and jasmonate (JA) signaling to facilitate infection by the fungal pathogen Fusarium graminearum. 9S-lypoxygenase-derived oxylipins activate brassinosteroid signaling to promote cell wall-based defense and limit pathogen infection. The LOX1-derived compound (9S)-hydroperoxy-(10E,12Z,15Z)-octadecatrienoate protects plant tissues against infection by the bacterial pathogen Pseudomonas syringae pv tomato DC3000. The LOX1-derived oxylipins are required to trigger stomatal closure in response to both infection by the bacterial pathogen Pseudomonas syringae pv tomato DC3000, and the pathogen-associated molecular pattern (PAMP) flagellin peptide flg22. Contributes to the oxidation of free fatty acids during seed aging. This chain is Linoleate 9S-lipoxygenase 1, found in Arabidopsis thaliana (Mouse-ear cress).